The sequence spans 64 residues: Bacteriocin plantaricin ASM1 (64 aa).

The first 21 residues, Met-1 to Gly-21, serve as a signal peptide directing secretion. The segment at residues Ser-61 to Cys-64 is a cross-link (lanthionine (Ser-Cys)).

In terms of processing, contains 2 disulfide bonds.

The protein resides in the secreted. In terms of biological role, bacteriocin with a narrow antibacterial spectrum. Antibacterial activity against the Gram-positive bacteria L.plantarun, L.pentosus, L.curvatus, L.lindneri, L.mesenteroides and E.faecilis. Lacks antibacterial activity against the Gram-positive bacteria L.brevis, L.sakei, L.lactis, P.acidilactici, B.subtilis, B.cereus, L.monocytogenes and S.aureus, and against the Gram-negative bacteria E.coli and S.typhimurium. The protein is Bacteriocin plantaricin ASM1 of Lactiplantibacillus plantarum (Lactobacillus plantarum).